The primary structure comprises 503 residues: CDK5 regulatory subunit-associated protein 3 (503 aa).

3 short sequence motifs (shuffled ATG8-binding motif) span residues 266-269, 288-291, and 306-309; these read IDWG. The required for interaction with UFL1 and mediates interaction with CHEK1 stretch occupies residues 268–503; that stretch reads WGDFGVEAVS…RPVNLMGTSL (236 aa). The RPL10a-binding domain (RBD) stretch occupies residues 352–367; that stretch reads DELMELEIFLSQRAVE. A Glycyl lysine isopeptide (Lys-Gly) (interchain with G-Cter in SUMO2) cross-link involves residue K447.

The protein belongs to the CDK5RAP3 family. As to quaternary structure, substrate adapter component of the UFM1 ribosome E3 ligase (UREL) complex, composed of UFL1, DDRGK1 and CDK5RAP3. Interaction with UFL1 anchors CDK5RAP3 in the cytoplasm, preventing its translocation to the nucleus which allows expression of the CCND1 cyclin and progression of cells through the G1/S transition. Interacts with ATG8 family proteins MAP1LC3A, MAP1LC3B, GABARAP, GABARAPL1 and GABARAPL2. Interacts with CDK5R1; competes with CDK5RAP1 and CDK5RAP2. Interacts with RELA. Interacts with CHEK1; may negatively regulate CHEK1 and thereby stimulate entry into mitosis. Interacts with CDKN2A/ARF and MDM2; forms a ternary complex involved in regulation of p53/TP53. Interacts with MAPK14. Interacts with CCNB1. Interacts with TUBG1; may regulate CDK5RAP3 in mitotic G2/M transition checkpoint. In terms of processing, may be phosphorylated by CDK5. Ubiquitinated. Probably triggers proteasomal degradation and is negatively regulated by UFL1. Post-translationally, may be ufmylated. In terms of processing, cleaved by caspases early during apoptosis, the resulting peptides may play a role in rupture of the nuclear envelope. Widely expressed with higher expression in secretory tissues.

Its subcellular location is the endoplasmic reticulum membrane. The protein localises to the cytoplasm. It localises to the nucleus. It is found in the cytoskeleton. The protein resides in the microtubule organizing center. Its subcellular location is the centrosome. Its function is as follows. Substrate adapter of E3 ligase complexes mediating ufmylation, the covalent attachment of the ubiquitin-like modifier UFM1 to substrate proteins, and which is involved in various processes, such as ribosome recycling and reticulophagy (also called ER-phagy). As part of the UREL complex, plays a key role in ribosome recycling by promoting mono-ufmylation of RPL26/uL24 subunit of the 60S ribosome. Ufmylation of RPL26/uL24 occurs on free 60S ribosomes following ribosome dissociation: it weakens the junction between post-termination 60S subunits and SEC61 translocons, promoting release and recycling of the large ribosomal subunit from the endoplasmic reticulum membrane. Ufmylation of RPL26/uL24 and subsequent 60S ribosome recycling either take place after normal termination of translation or after ribosome stalling during cotranslational translocation at the endoplasmic reticulum. Within the UREL complex, CDK5RAP3 acts as a substrate adapter that constrains UFL1 ligase activity to mono-ufmylate RPL26/uL24 at 'Lys-134'. The UREL complex is also involved in reticulophagy in response to endoplasmic reticulum stress by promoting ufmylation of proteins such as CYB5R3, thereby promoting lysosomal degradation of ufmylated proteins. Also acts as a regulator of transcription: negatively regulates NF-kappa-B-mediated gene transcription through the control of RELA phosphorylation. Also regulates mitotic G2/M transition checkpoint and mitotic G2 DNA damage checkpoint. Through its interaction with CDKN2A/ARF and MDM2 may induce MDM2-dependent p53/TP53 ubiquitination, stabilization and activation in the nucleus, thereby promoting G1 cell cycle arrest and inhibition of cell proliferation. May also play a role in the rupture of the nuclear envelope during apoptosis. May regulate MAPK14 activity by regulating its dephosphorylation by PPM1D/WIP1. Required for liver development. The chain is CDK5 regulatory subunit-associated protein 3 from Mus musculus (Mouse).